Here is a 240-residue protein sequence, read N- to C-terminus: 3-deoxy-D-manno-octulosonic acid kinase (240 aa).

Residue Asp-170 is part of the active site.

It belongs to the protein kinase superfamily. KdkA/RfaP family.

The protein resides in the cell inner membrane. It catalyses the reaction an alpha-Kdo-(2-&gt;6)-lipid IVA + ATP = a 4-O-phospho-alpha-Kdo-(2-&gt;6)-lipid IVA + ADP + H(+). It participates in bacterial outer membrane biogenesis; LPS core biosynthesis. Functionally, catalyzes the ATP-dependent phosphorylation of the 3-deoxy-D-manno-octulosonic acid (Kdo) residue in Kdo-lipid IV(A) at the 4-OH position. The sequence is that of 3-deoxy-D-manno-octulosonic acid kinase from Mannheimia succiniciproducens (strain KCTC 0769BP / MBEL55E).